A 183-amino-acid chain; its full sequence is Capsid protein (183 aa).

Residues 136-183 (NAPILSTLPETTVVRRRGRSPRRRTPSPRRRRSQSPRRRRSQSPASQC) are disordered. The span at 149–176 (VRRRGRSPRRRTPSPRRRRSQSPRRRRS) shows a compositional bias: basic residues. Residues serine 155, serine 162, and serine 170 each carry the phosphoserine; by host modification. The 1; half-length repeat unit spans residues 155 to 161 (SPRRRTP). A 3 X 8 AA repeats of S-P-R-R-R-[PR]-S-Q region spans residues 155–177 (SPRRRTPSPRRRRSQSPRRRRSQ). The Bipartite nuclear localization signal signature appears at 158-175 (RRTPSPRRRRSQSPRRRR). Tandem repeats lie at residues 162-169 (SPRRRRSQ) and 170-177 (SPRRRRSQ). The segment at 177–183 (QSPASQC) is RNA binding.

Belongs to the orthohepadnavirus core antigen family. As to quaternary structure, homodimerizes, then multimerizes. Interacts with cytosol exposed regions of viral L glycoprotein present in the reticulum-to-Golgi compartment. Interacts with human FLNB. Phosphorylated form interacts with host importin alpha; this interaction depends on the exposure of the NLS, which itself depends upon genome maturation and/or phosphorylation of the capsid protein. Interacts with host NUP153. Post-translationally, phosphorylated by host SRPK1, SRPK2, and maybe protein kinase C or GAPDH. Phosphorylation is critical for pregenomic RNA packaging. Protein kinase C phosphorylation is stimulated by HBx protein and may play a role in transport of the viral genome to the nucleus at the late step during the viral replication cycle.

The protein resides in the virion. It localises to the host cytoplasm. In terms of biological role, self assembles to form an icosahedral capsid. Most capsids appear to be large particles with an icosahedral symmetry of T=4 and consist of 240 copies of capsid protein, though a fraction forms smaller T=3 particles consisting of 180 capsid proteins. Entering capsids are transported along microtubules to the nucleus. Phosphorylation of the capsid is thought to induce exposure of nuclear localization signal in the C-terminal portion of the capsid protein that allows binding to the nuclear pore complex via the importin (karyopherin-) alpha and beta. Capsids are imported in intact form through the nuclear pore into the nuclear basket, where it probably binds NUP153. Only capsids that contain the mature viral genome can release the viral DNA and capsid protein into the nucleoplasm. Immature capsids get stuck in the basket. Capsids encapsulate the pre-genomic RNA and the P protein. Pre-genomic RNA is reverse-transcribed into DNA while the capsid is still in the cytoplasm. The capsid can then either be directed to the nucleus, providing more genomes for transcription, or bud through the endoplasmic reticulum to provide new virions. This chain is Capsid protein, found in Pan troglodytes (Chimpanzee).